The primary structure comprises 125 residues: Large ribosomal subunit protein bL17 (125 aa).

The protein belongs to the bacterial ribosomal protein bL17 family. As to quaternary structure, part of the 50S ribosomal subunit. Contacts protein L32.

This Blochmanniella pennsylvanica (strain BPEN) protein is Large ribosomal subunit protein bL17.